The chain runs to 332 residues: MVTLNIYSIIKMKRFPKRNYLRKTKVSFFNRSQRHFSQHLNIDIIGPLFKITRKDEKHYNFQYNDGLNILDTPFNNDDDHCTPGKLYFSDSKNICKYLGFGDNLRKISLPIDNPDFKMTKCLYGEKYGANMLIFGEKFDLDKVETYQKMILMDIDIRAGNDNAMIIAAQKGNLEIVKFLVESGANVKSQDNCAVRLASEFGHLDVVEYLYKSGANVKADGNYAITWACKNGHLPVIEFLTSVGADIKAAQNLPIKMAAIGGHLNVIKYLVDRGANISTDNDYVFNIACRNGHTDLAEYAVSLGADIFSDGCYGIDHAIRYNHYKIVDKFIGT.

ANK repeat units lie at residues 159–188 (GNDN…NVKS), 190–218 (DNCA…NVKA), 219–248 (DGNY…DIKA), 249–278 (AQNL…NIST), and 280–308 (NDYV…DIFS).

The protein is Putative ankyrin repeat protein R896 of Acanthamoeba polyphaga mimivirus (APMV).